Here is a 485-residue protein sequence, read N- to C-terminus: Sulfate adenylyltransferase subunit 1 (485 aa).

A tr-type G domain is found at 30 to 243 (KGLLRFLTCG…ELLETIDTQR (214 aa)). The tract at residues 39–46 (GSVDDGKS) is G1. 39 to 46 (GSVDDGKS) contributes to the GTP binding site. Residues 97–101 (GITID) are G2. Residues 118 to 121 (DTPG) form a G3 region. GTP contacts are provided by residues 118 to 122 (DTPGH) and 173 to 176 (NKMD). The interval 173-176 (NKMD) is G4. The G5 stretch occupies residues 210–212 (SAL).

Belongs to the TRAFAC class translation factor GTPase superfamily. Classic translation factor GTPase family. CysN/NodQ subfamily. As to quaternary structure, heterodimer composed of CysD, the smaller subunit, and CysN.

The catalysed reaction is sulfate + ATP + H(+) = adenosine 5'-phosphosulfate + diphosphate. It participates in sulfur metabolism; hydrogen sulfide biosynthesis; sulfite from sulfate: step 1/3. Its function is as follows. With CysD forms the ATP sulfurylase (ATPS) that catalyzes the adenylation of sulfate producing adenosine 5'-phosphosulfate (APS) and diphosphate, the first enzymatic step in sulfur assimilation pathway. APS synthesis involves the formation of a high-energy phosphoric-sulfuric acid anhydride bond driven by GTP hydrolysis by CysN coupled to ATP hydrolysis by CysD. The protein is Sulfate adenylyltransferase subunit 1 of Shewanella oneidensis (strain ATCC 700550 / JCM 31522 / CIP 106686 / LMG 19005 / NCIMB 14063 / MR-1).